Consider the following 107-residue polypeptide: 4-carboxymethyl-4-methylbutenolide mutase (107 aa).

His-26 functions as the Proton donor/acceptor in the catalytic mechanism. The 3-methylmuconolactone site is built by His-26 and Tyr-39. Positions 26 and 39 each coordinate 4-methylmuconolactone.

This sequence belongs to the MmlI family. Homodimer.

The catalysed reaction is 4-methylmuconolactone = 3-methylmuconolactone. Its activity is regulated as follows. Inhibited by p-chloromercuribenzoate. Its function is as follows. Isomerase involved in the degradation of 4-methylsalicylate and 5-methylsalicylate. Catalyzes the isomerization of the dead-end metabolite 4-methylmuconolactone (4-ML) to 3-methylmuconolactone (3-ML), which can then be further degraded through a modified 3-oxoadipate pathway. Can also use 1-methylbislactone but not 3-methyl-cis,cis-muconate. The protein is 4-carboxymethyl-4-methylbutenolide mutase of Pseudomonas reinekei.